The primary structure comprises 140 residues: MAKKVAAVVKIQLPAGKATPAPPVGTALGPHGVNIMAFCKEFNERTAKDAGLIIPVVITIYADRSFSFITKTPPAAVLLKKAAGIESGSPQPNKQKVGKITREQLREIAEIKMKDLNASDIEAAMRMIAGTARSMGIEIV.

It belongs to the universal ribosomal protein uL11 family. As to quaternary structure, part of the ribosomal stalk of the 50S ribosomal subunit. Interacts with L10 and the large rRNA to form the base of the stalk. L10 forms an elongated spine to which L12 dimers bind in a sequential fashion forming a multimeric L10(L12)X complex. One or more lysine residues are methylated.

Functionally, forms part of the ribosomal stalk which helps the ribosome interact with GTP-bound translation factors. The protein is Large ribosomal subunit protein uL11 of Thermoanaerobacter pseudethanolicus (strain ATCC 33223 / 39E) (Clostridium thermohydrosulfuricum).